Consider the following 243-residue polypeptide: Probable phosphatase CLI_3563 (243 aa).

Residues H8, H10, H16, H41, E74, H102, H132, D192, and H194 each contribute to the Zn(2+) site.

Belongs to the PHP family. It depends on Zn(2+) as a cofactor.

In Clostridium botulinum (strain Langeland / NCTC 10281 / Type F), this protein is Probable phosphatase CLI_3563.